Consider the following 397-residue polypeptide: Ribosomal RNA large subunit methyltransferase I (397 aa).

The 78-residue stretch at 2–79 folds into the PUA domain; it reads TAAIYLVKGR…KEEINKAFFV (78 aa).

The protein belongs to the methyltransferase superfamily. RlmI family.

It is found in the cytoplasm. The enzyme catalyses cytidine(1962) in 23S rRNA + S-adenosyl-L-methionine = 5-methylcytidine(1962) in 23S rRNA + S-adenosyl-L-homocysteine + H(+). Specifically methylates the cytosine at position 1962 (m5C1962) of 23S rRNA. The protein is Ribosomal RNA large subunit methyltransferase I of Vibrio parahaemolyticus serotype O3:K6 (strain RIMD 2210633).